An 820-amino-acid chain; its full sequence is MDLLYTTVRKGNANTFSFTETQHNFEFLCNTSSCNVLAFTTTNELTEPSPIQGWGFHIYVVDLNAPWFPYRVTSNKYPISVLQWDVLGRYLLVGDRNGHVQIFVQKDNLLSEWKSVYSVKFPGENIIAAAFFHNGRKLNLQTDKKDQYLYLEKFQKVKFAASVRQFGGVPVEGVLIVSATGMLGAFVIPPESNANIQKLSEPIKLVPVTESLAVTRNYYTTADICYGKNGYFRVAVGNGDSKSANSNMIQCFRVAVKQREETLEINSTALPSFFLAEGMGKDLKELRVAHVQWVFSEDADSLIVASNHTGGGCFVEQWELTEESTPIHKLFQSNKNEPFKTLLWVSKSQYMYTSKVIKICTTKLNFLSSSFVYLAMSDNSIHCLQRDTLKRLTCTNIVSIRDPNDHSSKQIKLGLKIGAIDVTHLGHLFVTLDTFGQLYVYRCNFMCQDQLGTPALIVQTVNLLEYCLVTGLDSLDILLTLKTQILENVLERLTENFHRQPPNVQQYYYVNFLTMKIALYRLSISGQQKAHDLSNLLILHSILIAFKSLLRPSDLTSHDKGPAENLAMVLSESVPDVDKVLLNVEAKEFTMERPTLQSLQQLIQWVADLALNILAKLPESRSFMSNKSQGYDISKDIIALNSIRELLVMIRIWGLLNPQCLPVFSRSADNLDILGTLFRLLTKLSLNPNEPDDLLLDECCLLPNQVLIPQLQYVPSRTMIASPLLPHVTLPVMCDYGVENESLKFCPEVPIVEGGLSNDNVIDSVMYLQLGRRPPSLRRCTRCGSCSSVVSVAKTAAMKAWEQRWIDKCRCNGFWRLEVA.

WD repeat units lie at residues 74–114, 621–665, and 757–811; these read SNKY…SEWK, RSFM…PVFS, and SNDN…KCRC.

This sequence belongs to the Mediator complex subunit 16 family. As to quaternary structure, component of the Mediator complex.

The protein localises to the nucleus. Component of the Mediator complex, a coactivator involved in the regulated transcription of nearly all RNA polymerase II-dependent genes. Mediator functions as a bridge to convey information from gene-specific regulatory proteins to the basal RNA polymerase II transcription machinery. Mediator is recruited to promoters by direct interactions with regulatory proteins and serves as a scaffold for the assembly of a functional preinitiation complex with RNA polymerase II and the general transcription factors. The protein is Mediator of RNA polymerase II transcription subunit 16 (MED16) of Aedes aegypti (Yellowfever mosquito).